The following is a 136-amino-acid chain: Large-conductance mechanosensitive channel (136 aa).

The next 2 helical transmembrane spans lie at F10–G30 and G76–V96.

It belongs to the MscL family. In terms of assembly, homopentamer.

The protein localises to the cell inner membrane. Its function is as follows. Channel that opens in response to stretch forces in the membrane lipid bilayer. May participate in the regulation of osmotic pressure changes within the cell. In Yersinia enterocolitica serotype O:8 / biotype 1B (strain NCTC 13174 / 8081), this protein is Large-conductance mechanosensitive channel.